The chain runs to 233 residues: 7-cyano-7-deazaguanine synthase (233 aa).

Residue 13 to 23 (LSGGLDSATAM) coordinates ATP. Residues Cys197, Cys207, Cys210, and Cys213 each contribute to the Zn(2+) site.

This sequence belongs to the QueC family. Zn(2+) serves as cofactor.

It carries out the reaction 7-carboxy-7-deazaguanine + NH4(+) + ATP = 7-cyano-7-deazaguanine + ADP + phosphate + H2O + H(+). The protein operates within purine metabolism; 7-cyano-7-deazaguanine biosynthesis. Its function is as follows. Catalyzes the ATP-dependent conversion of 7-carboxy-7-deazaguanine (CDG) to 7-cyano-7-deazaguanine (preQ(0)). This Desulfatibacillum aliphaticivorans protein is 7-cyano-7-deazaguanine synthase.